Here is a 348-residue protein sequence, read N- to C-terminus: Nicotinate-nucleotide--dimethylbenzimidazole phosphoribosyltransferase (348 aa).

Glutamate 316 acts as the Proton acceptor in catalysis.

Belongs to the CobT family.

It carries out the reaction 5,6-dimethylbenzimidazole + nicotinate beta-D-ribonucleotide = alpha-ribazole 5'-phosphate + nicotinate + H(+). It functions in the pathway nucleoside biosynthesis; alpha-ribazole biosynthesis; alpha-ribazole from 5,6-dimethylbenzimidazole: step 1/2. Its function is as follows. Catalyzes the synthesis of alpha-ribazole-5'-phosphate from nicotinate mononucleotide (NAMN) and 5,6-dimethylbenzimidazole (DMB). The protein is Nicotinate-nucleotide--dimethylbenzimidazole phosphoribosyltransferase of Xanthomonas euvesicatoria pv. vesicatoria (strain 85-10) (Xanthomonas campestris pv. vesicatoria).